Reading from the N-terminus, the 863-residue chain is Leucine--tRNA ligase (863 aa).

The 'HIGH' region signature appears at 42-52 (PYPSGRLHMGH). The 'KMSKS' region signature appears at 622-626 (KMSKS). Lysine 625 is an ATP binding site.

It belongs to the class-I aminoacyl-tRNA synthetase family.

The protein resides in the cytoplasm. The enzyme catalyses tRNA(Leu) + L-leucine + ATP = L-leucyl-tRNA(Leu) + AMP + diphosphate. This chain is Leucine--tRNA ligase, found in Shewanella loihica (strain ATCC BAA-1088 / PV-4).